A 379-amino-acid chain; its full sequence is GTP cyclohydrolase 1 type 2 homolog (379 aa).

Positions 64, 65, 103, 333, and 337 each coordinate a divalent metal cation.

Belongs to the GTP cyclohydrolase I type 2/NIF3 family. As to quaternary structure, homohexamer.

The protein is GTP cyclohydrolase 1 type 2 homolog of Mycobacterium bovis (strain ATCC BAA-935 / AF2122/97).